The following is a 519-amino-acid chain: T-box transcription factor TBX5 (519 aa).

Positions methionine 1–glutamine 43 are disordered. The span at alanine 17 to glutamine 28 shows a compositional bias: basic and acidic residues. Residues aspartate 29–glutamine 43 are compositionally biased toward polar residues. A DNA-binding region (T-box) is located at residues leucine 63–glycine 238. Disordered stretches follow at residues glutamate 254–proline 312 and glutamate 335–alanine 376. Residues threonine 262–aspartate 303 are compositionally biased toward polar residues.

As to quaternary structure, monomer. Homodimer (via the T-box); binds DNA as homodimer.

The protein resides in the nucleus. Its subcellular location is the cytoplasm. In terms of biological role, DNA-binding protein that regulates the transcription of several genes and is involved in heart development and limb pattern formation. May bind to the core DNA motif of promoters. In Xenopus tropicalis (Western clawed frog), this protein is T-box transcription factor TBX5 (tbx5).